The primary structure comprises 60 residues: Cytotoxin sagitoxin (60 aa).

4 cysteine pairs are disulfide-bonded: Cys-3/Cys-21, Cys-14/Cys-38, Cys-42/Cys-53, and Cys-54/Cys-59.

This sequence belongs to the three-finger toxin family. Short-chain subfamily. Type IA cytotoxin sub-subfamily. Monomer in solution; Homodimer and oligomer (homohexamer) in the presence of negatively charged lipids forming a pore with a size ranging between 20 and 30 Angstroms. In terms of tissue distribution, expressed by the venom gland.

Its subcellular location is the secreted. It is found in the target cell membrane. In terms of biological role, shows cytolytic activity on many different cells by forming pore in lipid membranes. In vivo, increases heart rate or kill the animal by cardiac arrest. In addition, it binds to heparin with high affinity, interacts with Kv channel-interacting protein 1 (KCNIP1) in a calcium-independent manner, and binds to integrin alpha-V/beta-3 (ITGAV/ITGB3) with moderate affinity. This chain is Cytotoxin sagitoxin, found in Naja sagittifera (Andaman cobra).